Consider the following 556-residue polypeptide: 2-succinyl-5-enolpyruvyl-6-hydroxy-3-cyclohexene-1-carboxylate synthase (556 aa).

This sequence belongs to the TPP enzyme family. MenD subfamily. As to quaternary structure, homodimer. Mg(2+) serves as cofactor. It depends on Mn(2+) as a cofactor. Requires thiamine diphosphate as cofactor.

The catalysed reaction is isochorismate + 2-oxoglutarate + H(+) = 5-enolpyruvoyl-6-hydroxy-2-succinyl-cyclohex-3-ene-1-carboxylate + CO2. Its pathway is quinol/quinone metabolism; 1,4-dihydroxy-2-naphthoate biosynthesis; 1,4-dihydroxy-2-naphthoate from chorismate: step 2/7. It functions in the pathway quinol/quinone metabolism; menaquinone biosynthesis. Its function is as follows. Catalyzes the thiamine diphosphate-dependent decarboxylation of 2-oxoglutarate and the subsequent addition of the resulting succinic semialdehyde-thiamine pyrophosphate anion to isochorismate to yield 2-succinyl-5-enolpyruvyl-6-hydroxy-3-cyclohexene-1-carboxylate (SEPHCHC). This Shigella sonnei (strain Ss046) protein is 2-succinyl-5-enolpyruvyl-6-hydroxy-3-cyclohexene-1-carboxylate synthase.